Reading from the N-terminus, the 290-residue chain is MQLLDGKITSDQIKEELKTKVEAIKAKGGKIPHLAAVLVGDSGAAVTYVNAKVKACELVGFKSTLVKLPETITEADLLAKVAEINADKDIDGYIVQLPLPKHIDEQKVTEAISPDKDVDGFHPTSLGRMVLNLPTYLPATPYGIMQLLERNGIETSGKHCVVMGRSHIVGSPMSILMARNTNPGNATVTMVHSRTKNLKELTLQADILIVAIGKPEFVTADMVKEGAVVVDVGIHRIDDATKKSGFRLLGDVKFDEVAPKTSYISPVPGGVGPMTIASLLMNTLQAAALK.

NADP(+) is bound by residues 164–166 (GRS), serine 193, and isoleucine 234.

It belongs to the tetrahydrofolate dehydrogenase/cyclohydrolase family. In terms of assembly, homodimer.

The catalysed reaction is (6R)-5,10-methylene-5,6,7,8-tetrahydrofolate + NADP(+) = (6R)-5,10-methenyltetrahydrofolate + NADPH. It catalyses the reaction (6R)-5,10-methenyltetrahydrofolate + H2O = (6R)-10-formyltetrahydrofolate + H(+). It participates in one-carbon metabolism; tetrahydrofolate interconversion. Catalyzes the oxidation of 5,10-methylenetetrahydrofolate to 5,10-methenyltetrahydrofolate and then the hydrolysis of 5,10-methenyltetrahydrofolate to 10-formyltetrahydrofolate. The protein is Bifunctional protein FolD of Cytophaga hutchinsonii (strain ATCC 33406 / DSM 1761 / CIP 103989 / NBRC 15051 / NCIMB 9469 / D465).